Consider the following 180-residue polypeptide: Shikimate kinase (180 aa).

Residue 19 to 24 (GAGKTT) coordinates ATP. Mg(2+) is bound at residue Thr23. Residues Asp41, Arg65, and Gly87 each coordinate substrate. Residue Arg125 participates in ATP binding. Arg144 is a substrate binding site.

Belongs to the shikimate kinase family. As to quaternary structure, monomer. Mg(2+) is required as a cofactor.

It localises to the cytoplasm. It carries out the reaction shikimate + ATP = 3-phosphoshikimate + ADP + H(+). It participates in metabolic intermediate biosynthesis; chorismate biosynthesis; chorismate from D-erythrose 4-phosphate and phosphoenolpyruvate: step 5/7. Catalyzes the specific phosphorylation of the 3-hydroxyl group of shikimic acid using ATP as a cosubstrate. This is Shikimate kinase from Acinetobacter baumannii (strain SDF).